We begin with the raw amino-acid sequence, 99 residues long: Protein IDA-LIKE 3 (99 aa).

A signal peptide spans 1-32; it reads MSSRSHRSRKYQLTRTIPILVLLLVLLSCCNG. Positions 36–45 are enriched in polar residues; sequence TNVFNTSSPP. Disordered stretches follow at residues 36–58 and 73–99; these read TNVFNTSSPPKQKDVVSPPHDHV and SLPRQFPVPTSGPSRKHNEIGLSSTKT. The segment covering 46 to 58 has biased composition (basic and acidic residues); sequence KQKDVVSPPHDHV.

In terms of tissue distribution, expressed in flowers and seedlings. Detected at the base of pedicel, in the floral abscission zone and in vascular tissues.

The protein resides in the secreted. The protein localises to the extracellular space. Functionally, may be involved in floral abscission. In Arabidopsis thaliana (Mouse-ear cress), this protein is Protein IDA-LIKE 3 (IDL3).